Here is a 158-residue protein sequence, read N- to C-terminus: Ribonuclease H (158 aa).

The region spanning 3 to 144 is the RNase H type-1 domain; it reads ELKLIHIFTD…CDQLARAAAE (142 aa). Residues Asp12, Glu50, Asp72, and Asp136 each coordinate Mg(2+). Residues 137–158 are disordered; the sequence is QLARAAAEASPTQVDEGYQPES.

It belongs to the RNase H family. In terms of assembly, monomer. It depends on Mg(2+) as a cofactor.

It localises to the cytoplasm. It carries out the reaction Endonucleolytic cleavage to 5'-phosphomonoester.. In terms of biological role, endonuclease that specifically degrades the RNA of RNA-DNA hybrids. The protein is Ribonuclease H of Shewanella sp. (strain ANA-3).